The following is a 304-amino-acid chain: Oxygen-dependent coproporphyrinogen-III oxidase (304 aa).

Serine 95 serves as a coordination point for substrate. Histidine 99 and histidine 109 together coordinate a divalent metal cation. The Proton donor role is filled by histidine 109. A substrate-binding site is contributed by 111-113 (NVR). Residues histidine 148 and histidine 178 each coordinate a divalent metal cation. The tract at residues 243–278 (YVEFNLVYDRGTLFGLQSGGRTESILMSLPPLVRWR) is important for dimerization. Residue 261–263 (GGR) participates in substrate binding.

Belongs to the aerobic coproporphyrinogen-III oxidase family. In terms of assembly, homodimer. The cofactor is a divalent metal cation.

It localises to the cytoplasm. The enzyme catalyses coproporphyrinogen III + O2 + 2 H(+) = protoporphyrinogen IX + 2 CO2 + 2 H2O. It functions in the pathway porphyrin-containing compound metabolism; protoporphyrin-IX biosynthesis; protoporphyrinogen-IX from coproporphyrinogen-III (O2 route): step 1/1. Involved in the heme biosynthesis. Catalyzes the aerobic oxidative decarboxylation of propionate groups of rings A and B of coproporphyrinogen-III to yield the vinyl groups in protoporphyrinogen-IX. The chain is Oxygen-dependent coproporphyrinogen-III oxidase from Thioalkalivibrio sulfidiphilus (strain HL-EbGR7).